Here is a 32-residue protein sequence, read N- to C-terminus: Phallacidin proprotein (32 aa).

Residues 1–10 constitute a propeptide that is removed on maturation; that stretch reads MSDINATRLP. The cyclopeptide (Ala-Pro) cross-link spans 11-17; sequence AWLVDCP. A cross-link (2'-cysteinyl-6'-hydroxytryptophan sulfoxide (Trp-Cys)) is located at residues 12-16; sequence WLVDC. A propeptide spanning residues 18–32 is cleaved from the precursor; the sequence is CVGDDINRLLTRGEK.

It belongs to the MSDIN fungal toxin family. In terms of processing, processed by the macrocyclase-peptidase enzyme POPB to yield a toxic cyclic heptapeptide. POPB first removes 10 residues from the N-terminus. Conformational trapping of the remaining peptide forces the enzyme to release this intermediate rather than proceed to macrocyclization. The enzyme rebinds the remaining peptide in a different conformation and catalyzes macrocyclization of the N-terminal 7 residues.

Its function is as follows. Major toxin that belongs to the bicyclic heptapeptides called phallotoxins. Although structurally related to amatoxins, phallotoxins have a different mode of action, which is the stabilization of F-actin. Phallotoxins are poisonous when administered parenterally, but not orally because of poor absorption. This Amanita pallidorosea protein is Phallacidin proprotein.